The sequence spans 823 residues: Protein ROOT HAIR DEFECTIVE 3 homolog 2 (823 aa).

Over 1–688 the chain is Cytoplasmic; it reads MEVPISGGGG…EAHRRSNNWL (688 aa). The region spanning 45–260 is the GB1/RHD3-type G domain; it reads GLSYAVVSIV…IAPGGLAADR (216 aa). Residue 55–62 coordinates GTP; sequence GPQGSGKS. Residues 226–246 are a coiled coil; the sequence is LSSYEEKENLFKEQVGQLRQR. Residues 689 to 709 form a helical membrane-spanning segment; it reads PPAWTVLLLAILGYNEFIFLL. Over 710–712 the chain is Lumenal; the sequence is RNP. A helical membrane pass occupies residues 713-733; that stretch reads LYLLGLFVAFVVSYAAWLQYD. The Cytoplasmic segment spans residues 734–823; the sequence is ITAYFRHGTL…SVGSNSDDES (90 aa). The segment at 770 to 823 is disordered; that stretch reads NQKSSSHPPRHRPPLHPQSFRNQAQQQSQAQVQYQAPSSLSSSSSVGSNSDDES. Residues 786–823 are compositionally biased toward low complexity; that stretch reads PQSFRNQAQQQSQAQVQYQAPSSLSSSSSVGSNSDDES.

This sequence belongs to the TRAFAC class dynamin-like GTPase superfamily. GB1/RHD3 GTPase family. RHD3 subfamily.

It localises to the endoplasmic reticulum membrane. Its function is as follows. Probable GTP-binding protein that may be involved in cell development. The chain is Protein ROOT HAIR DEFECTIVE 3 homolog 2 from Oryza sativa subsp. japonica (Rice).